A 252-amino-acid chain; its full sequence is Triosephosphate isomerase (252 aa).

Residue 9-11 (NWK) coordinates substrate. His-95 serves as the catalytic Electrophile. Residue Glu-167 is the Proton acceptor of the active site. Substrate contacts are provided by residues Gly-173, Ser-213, and 234 to 235 (GG). At Ser-213 the chain carries Phosphoserine.

This sequence belongs to the triosephosphate isomerase family. In terms of assembly, homodimer.

It is found in the cytoplasm. It catalyses the reaction D-glyceraldehyde 3-phosphate = dihydroxyacetone phosphate. Its pathway is carbohydrate biosynthesis; gluconeogenesis. It functions in the pathway carbohydrate degradation; glycolysis; D-glyceraldehyde 3-phosphate from glycerone phosphate: step 1/1. Functionally, involved in the gluconeogenesis. Catalyzes stereospecifically the conversion of dihydroxyacetone phosphate (DHAP) to D-glyceraldehyde-3-phosphate (G3P). This is Triosephosphate isomerase from Oceanobacillus iheyensis (strain DSM 14371 / CIP 107618 / JCM 11309 / KCTC 3954 / HTE831).